We begin with the raw amino-acid sequence, 205 residues long: Transmembrane emp24 domain-containing protein A (205 aa).

The first 24 residues, 1–24 (MMNNKLLLLVIALLCIASNSIVES), serve as a signal peptide directing secretion. The Lumenal portion of the chain corresponds to 25 to 172 (FSFKVSAKVE…RNTAESTNSR (148 aa)). The GOLD domain occupies 34–116 (EECIYEEIGV…DKTVSFILSV (83 aa)). The chain crosses the membrane as a helical span at residues 173–193 (VLWWSVFEAFVLIALSIWQIY). The Cytoplasmic portion of the chain corresponds to 194–205 (YLRRFFEVKRAV).

The protein belongs to the EMP24/GP25L family.

Its subcellular location is the cytoplasmic vesicle membrane. Functionally, could have a role in the budding of coatomer-coated and other species of coated vesicles. This is Transmembrane emp24 domain-containing protein A (empA) from Dictyostelium discoideum (Social amoeba).